A 211-amino-acid chain; its full sequence is Stromal cell-derived factor 2 (211 aa).

A signal peptide spans 1–18 (MAVVPLLLLGGLWSAVGA). MIR domains are found at residues 21 to 75 (LGVV…IRGK), 83 to 138 (GTPI…VLCN), and 139 to 193 (GPYW…AMEG).

The protein localises to the secreted. The polypeptide is Stromal cell-derived factor 2 (SDF2) (Homo sapiens (Human)).